Consider the following 298-residue polypeptide: Small ribosomal subunit protein uS3m (298 aa).

The protein belongs to the universal ribosomal protein uS3 family.

The protein localises to the mitochondrion. This Acanthamoeba castellanii (Amoeba) protein is Small ribosomal subunit protein uS3m (RPS3).